Consider the following 131-residue polypeptide: Holin (131 aa).

The next 2 membrane-spanning stretches (helical) occupy residues 9 to 29 (IYLL…WGGL) and 40 to 60 (IIAG…AGTV). Residues 74–104 (VDQVTKGVEQVLAARQSAEAEVAKVKQALET) are a coiled coil.

This sequence belongs to the Mycobacterium phage D29 holin family. As to quaternary structure, homomultimer. Self-associates to form a pore.

The protein resides in the host cell inner membrane. Accumulates harmlessly in the cytoplasmic membrane until it reaches a critical concentration that triggers the formation of micron-scale pores (holes) causing host cell membrane disruption and endolysin escape into the periplasmic space. Determines the precise timing of host cell lysis. Participates with the endolysin protein in the sequential events which lead to the programmed host cell lysis releasing the mature viral particles from the host cell. The polypeptide is Holin (11) (Mycobacterium (Mycobacteriophage L5)).